Consider the following 186-residue polypeptide: ATP-dependent protease subunit HslV (186 aa).

The active site involves threonine 14. Na(+) contacts are provided by alanine 168, cysteine 171, and threonine 174.

Belongs to the peptidase T1B family. HslV subfamily. As to quaternary structure, a double ring-shaped homohexamer of HslV is capped on each side by a ring-shaped HslU homohexamer. The assembly of the HslU/HslV complex is dependent on binding of ATP.

The protein localises to the cytoplasm. The enzyme catalyses ATP-dependent cleavage of peptide bonds with broad specificity.. Its activity is regulated as follows. Allosterically activated by HslU binding. Its function is as follows. Protease subunit of a proteasome-like degradation complex believed to be a general protein degrading machinery. The sequence is that of ATP-dependent protease subunit HslV from Methylorubrum extorquens (strain CM4 / NCIMB 13688) (Methylobacterium extorquens).